The chain runs to 197 residues: Dephospho-CoA kinase (197 aa).

The 195-residue stretch at 3–197 (IIGLTGGIAS…IEEIWAKRFP (195 aa)) folds into the DPCK domain. Residue 11–16 (ASGKST) participates in ATP binding.

It belongs to the CoaE family.

Its subcellular location is the cytoplasm. The catalysed reaction is 3'-dephospho-CoA + ATP = ADP + CoA + H(+). It participates in cofactor biosynthesis; coenzyme A biosynthesis; CoA from (R)-pantothenate: step 5/5. Catalyzes the phosphorylation of the 3'-hydroxyl group of dephosphocoenzyme A to form coenzyme A. The chain is Dephospho-CoA kinase from Geobacter sulfurreducens (strain ATCC 51573 / DSM 12127 / PCA).